A 555-amino-acid chain; its full sequence is CTP synthase (555 aa).

The tract at residues 1–267 (MPKFVFVTGG…CKEVLEFLDL (267 aa)) is amidoligase domain. A CTP-binding site is contributed by serine 13. Residue serine 13 participates in UTP binding. Residues 14–19 (SIGKGI) and aspartate 71 contribute to the ATP site. Mg(2+) is bound by residues aspartate 71 and glutamate 141. Residues 148 to 150 (DIE), 188 to 193 (KTKPTQ), and lysine 224 contribute to the CTP site. UTP is bound by residues 188-193 (KTKPTQ) and lysine 224. A Glutamine amidotransferase type-1 domain is found at 292–534 (KVAVVGKYVQ…IAAAQSRLPR (243 aa)). Residue glycine 354 coordinates L-glutamine. Cysteine 381 (nucleophile; for glutamine hydrolysis) is an active-site residue. Residues 382–385 (LGMQ), glutamate 405, and arginine 462 contribute to the L-glutamine site. Catalysis depends on residues histidine 507 and glutamate 509. The segment at 532-555 (LPRSPQEALKQTQINSPNQSKNNP) is disordered. Residues 540–555 (LKQTQINSPNQSKNNP) show a composition bias toward polar residues.

This sequence belongs to the CTP synthase family. Homotetramer.

It catalyses the reaction UTP + L-glutamine + ATP + H2O = CTP + L-glutamate + ADP + phosphate + 2 H(+). The enzyme catalyses L-glutamine + H2O = L-glutamate + NH4(+). It carries out the reaction UTP + NH4(+) + ATP = CTP + ADP + phosphate + 2 H(+). Its pathway is pyrimidine metabolism; CTP biosynthesis via de novo pathway; CTP from UDP: step 2/2. With respect to regulation, allosterically activated by GTP, when glutamine is the substrate; GTP has no effect on the reaction when ammonia is the substrate. The allosteric effector GTP functions by stabilizing the protein conformation that binds the tetrahedral intermediate(s) formed during glutamine hydrolysis. Inhibited by the product CTP, via allosteric rather than competitive inhibition. Its function is as follows. Catalyzes the ATP-dependent amination of UTP to CTP with either L-glutamine or ammonia as the source of nitrogen. Regulates intracellular CTP levels through interactions with the four ribonucleotide triphosphates. The sequence is that of CTP synthase from Prochlorococcus marinus (strain MIT 9211).